Consider the following 576-residue polypeptide: Proteinaceous RNase P 3 (576 aa).

Positions 65 to 75 are enriched in basic and acidic residues; sequence NRRSRHDDESP. The tract at residues 65–88 is disordered; the sequence is NRRSRHDDESPKNPNKKKKGNRNP. 4 PPR repeats span residues 88-123, 129-166, 167-201, and 204-238; these read PEKS…DIRL, QSLL…GISP, NESS…GGVS, and RLRT…GIVL. The PRORP domain maps to 335–570; sequence SSAGKCLSCD…KEESLRSWMC (236 aa). Cysteine 340 and cysteine 343 together coordinate Zn(2+). 4 residues coordinate Mn(2+): aspartate 402, aspartate 480, aspartate 481, and aspartate 499. Histidine 553 and cysteine 570 together coordinate Zn(2+).

This sequence belongs to the PPR family. P subfamily. The cofactor is Mg(2+). Requires Mn(2+) as cofactor.

It is found in the nucleus. It catalyses the reaction Endonucleolytic cleavage of RNA, removing 5'-extranucleotides from tRNA precursor.. In terms of biological role, endonuclease RNase P responsible for the 5' maturation of tRNA precursors. Also involved in the maturation of mRNA and small nucleolar RNA (snoRNA). The chain is Proteinaceous RNase P 3 (PRORP3) from Arabidopsis thaliana (Mouse-ear cress).